The following is a 450-amino-acid chain: MTVFSLVASHHDLDLDTVARLSAGATGVGPALPGSGAAGAVVLATCNRVEIYAEADGAGVEAARAGLLSAVAASTSLPDEDVHAAFRTLDADATARHLFEVGVGLDSAVVGEREIAGQVRRALTAAQEAGTASGPLVRLFESATRTAKDVGSHTALGAAGRSVVSVALDLAEELRGLTDAAAQRDFWAGATILLIGTGAYAGTTLAQLADRGATTVGVHSASGRAEQFVADRGGWALALGGEAVAGAVAEADVIIGSSGGERQISPERLQELREGGRRPLTVVDLALSRDFDPAVADLPDVDLITLESVRLAAPEQAQVAVAEARALVDDAVEEYRAAQRGRSADAAIKALRRHTLGVLDRELERVRARHGCTAAAEEVEFALRRMVNQLLHEPSVRAKRLAAEGRLDRYEDALEAVFGIEAPGRPASEVGTVEAACPAHEDEGGAARIA.

Substrate contacts are provided by residues 45–48 (TCNR), Ser-107, 112–114 (ERE), and Gln-118. Cys-46 acts as the Nucleophile in catalysis. 196 to 201 (GTGAYA) is an NADP(+) binding site.

This sequence belongs to the glutamyl-tRNA reductase family. In terms of assembly, homodimer.

The enzyme catalyses (S)-4-amino-5-oxopentanoate + tRNA(Glu) + NADP(+) = L-glutamyl-tRNA(Glu) + NADPH + H(+). The protein operates within porphyrin-containing compound metabolism; protoporphyrin-IX biosynthesis; 5-aminolevulinate from L-glutamyl-tRNA(Glu): step 1/2. Catalyzes the NADPH-dependent reduction of glutamyl-tRNA(Glu) to glutamate 1-semialdehyde (GSA). The polypeptide is Glutamyl-tRNA reductase (Micrococcus luteus (strain ATCC 4698 / DSM 20030 / JCM 1464 / CCM 169 / CCUG 5858 / IAM 1056 / NBRC 3333 / NCIMB 9278 / NCTC 2665 / VKM Ac-2230) (Micrococcus lysodeikticus)).